Reading from the N-terminus, the 99-residue chain is RNA-binding protein HI_1333 (99 aa).

Residues 2-98 (TTLSTKQKQF…SEEAKIQLPR (97 aa)) enclose the CRM domain.

This chain is RNA-binding protein HI_1333, found in Haemophilus influenzae (strain ATCC 51907 / DSM 11121 / KW20 / Rd).